The sequence spans 323 residues: Malate dehydrogenase (323 aa).

NAD(+) is bound by residues 20 to 25 (GAGRVG) and aspartate 44. Arginine 93 and arginine 99 together coordinate substrate. NAD(+)-binding positions include asparagine 106 and 129–131 (VTN). Substrate is bound by residues asparagine 131 and arginine 162. Histidine 186 (proton acceptor) is an active-site residue.

This sequence belongs to the LDH/MDH superfamily. MDH type 3 family.

The enzyme catalyses (S)-malate + NAD(+) = oxaloacetate + NADH + H(+). Its function is as follows. Catalyzes the reversible oxidation of malate to oxaloacetate. This Nostoc sp. (strain PCC 7120 / SAG 25.82 / UTEX 2576) protein is Malate dehydrogenase.